The primary structure comprises 259 residues: tRNA (guanine-N(1)-)-methyltransferase (259 aa).

S-adenosyl-L-methionine-binding positions include Gly-113 and 133–138; that span reads IGDYVL.

It belongs to the RNA methyltransferase TrmD family. As to quaternary structure, homodimer.

The protein resides in the cytoplasm. It catalyses the reaction guanosine(37) in tRNA + S-adenosyl-L-methionine = N(1)-methylguanosine(37) in tRNA + S-adenosyl-L-homocysteine + H(+). In terms of biological role, specifically methylates guanosine-37 in various tRNAs. This Xanthomonas oryzae pv. oryzae (strain MAFF 311018) protein is tRNA (guanine-N(1)-)-methyltransferase.